A 454-amino-acid chain; its full sequence is Protection of telomeres protein 1b (454 aa).

The protein belongs to the telombin family. As to quaternary structure, interacts with TRB1, TRB2 and TRB3. Expressed at low levels in roots, rosette leaves, cauline leaves, stems and flowers.

The protein resides in the nucleus. It is found in the chromosome. The protein localises to the telomere. Its function is as follows. Negatively regulates telomerase activity and participates in chromosome end protection. Binds RNA non-specifically. Associates with a regulatory Pol III-dependent lncRNA, which represses telomerase activity in response to DNA damage. Binds single-stranded telomeric DNA with weak affinity. This is Protection of telomeres protein 1b from Arabidopsis thaliana (Mouse-ear cress).